A 404-amino-acid polypeptide reads, in one-letter code: Glucose-1-phosphate adenylyltransferase (404 aa).

Residues Tyr-99, Gly-164, 179–180, and Ser-197 contribute to the alpha-D-glucose 1-phosphate site; that span reads EK.

Belongs to the bacterial/plant glucose-1-phosphate adenylyltransferase family. In terms of assembly, homotetramer.

It carries out the reaction alpha-D-glucose 1-phosphate + ATP + H(+) = ADP-alpha-D-glucose + diphosphate. Its pathway is glycan biosynthesis; glycogen biosynthesis. Its function is as follows. Involved in the biosynthesis of ADP-glucose, a building block required for the elongation reactions to produce glycogen. Catalyzes the reaction between ATP and alpha-D-glucose 1-phosphate (G1P) to produce pyrophosphate and ADP-Glc. In Nocardia farcinica (strain IFM 10152), this protein is Glucose-1-phosphate adenylyltransferase.